The chain runs to 36 residues: Amanexitide proprotein 2 (36 aa).

Residues 1 to 10 (MSDINATRLP) constitute a propeptide that is removed on maturation. Positions 11–19 (VFSLPVFFP) form a cross-link, cyclopeptide (Val-Pro). Residues 20–36 (FVSDDIQAVLTRGESLC) constitute a propeptide that is removed on maturation.

The protein belongs to the MSDIN fungal toxin family. In terms of processing, processed by the macrocyclase-peptidase enzyme POPB to yield a toxic cyclic nonapeptide. POPB first removes 10 residues from the N-terminus. Conformational trapping of the remaining peptide forces the enzyme to release this intermediate rather than proceed to macrocyclization. The enzyme rebinds the remaining peptide in a different conformation and catalyzes macrocyclization of the N-terminal 9 residues. Expressed in basidiocarps.

Functionally, cyclic nonapeptide that belongs to the MSDIN-like toxin family responsible for a large number of food poisoning cases and deaths. This is Amanexitide proprotein 2 from Amanita exitialis (Guangzhou destroying angel).